A 701-amino-acid chain; its full sequence is Translation factor GUF1, mitochondrial (701 aa).

Residues 1–29 (MSCCKGLTPQCVRVRLPRRPALSHPARLY) constitute a mitochondrion transit peptide. The segment covering 23–50 (SHPARLYSSSSSSNSHSSPSRPRLLSRP) has biased composition (low complexity). The disordered stretch occupies residues 23 to 85 (SHPARLYSSS…RSSHHSSAPM (63 aa)). The tr-type G domain occupies 98-283 (ERYRNFCVIA…AVIEQIPHPT (186 aa)). Residues 107–114 (AHVDHGKS), 172–176 (DTPGH), and 226–229 (NKID) contribute to the GTP site.

It belongs to the TRAFAC class translation factor GTPase superfamily. Classic translation factor GTPase family. LepA subfamily.

It is found in the mitochondrion inner membrane. It carries out the reaction GTP + H2O = GDP + phosphate + H(+). Its function is as follows. Promotes mitochondrial protein synthesis. May act as a fidelity factor of the translation reaction, by catalyzing a one-codon backward translocation of tRNAs on improperly translocated ribosomes. Binds to mitochondrial ribosomes in a GTP-dependent manner. The sequence is that of Translation factor GUF1, mitochondrial from Pyricularia oryzae (strain 70-15 / ATCC MYA-4617 / FGSC 8958) (Rice blast fungus).